A 274-amino-acid chain; its full sequence is Dermonecrotic toxin LspiSicTox-betaIII1 G (274 aa).

The active site involves His5. Residues Glu25 and Asp27 each contribute to the Mg(2+) site. Catalysis depends on His41, which acts as the Nucleophile. Disulfide bonds link Cys45–Cys51 and Cys47–Cys189. Asn66 carries an N-linked (GlcNAc...) asparagine glycan. Mg(2+) is bound at residue Asp85.

The protein belongs to the arthropod phospholipase D family. Class II subfamily. Mg(2+) serves as cofactor. In terms of tissue distribution, expressed by the venom gland.

It localises to the secreted. The enzyme catalyses an N-(acyl)-sphingosylphosphocholine = an N-(acyl)-sphingosyl-1,3-cyclic phosphate + choline. It carries out the reaction an N-(acyl)-sphingosylphosphoethanolamine = an N-(acyl)-sphingosyl-1,3-cyclic phosphate + ethanolamine. It catalyses the reaction a 1-acyl-sn-glycero-3-phosphocholine = a 1-acyl-sn-glycero-2,3-cyclic phosphate + choline. The catalysed reaction is a 1-acyl-sn-glycero-3-phosphoethanolamine = a 1-acyl-sn-glycero-2,3-cyclic phosphate + ethanolamine. Functionally, dermonecrotic toxins cleave the phosphodiester linkage between the phosphate and headgroup of certain phospholipids (sphingolipid and lysolipid substrates), forming an alcohol (often choline) and a cyclic phosphate. This toxin acts on sphingomyelin (SM). It may also act on ceramide phosphoethanolamine (CPE), lysophosphatidylcholine (LPC) and lysophosphatidylethanolamine (LPE), but not on lysophosphatidylserine (LPS), and lysophosphatidylglycerol (LPG). It acts by transphosphatidylation, releasing exclusively cyclic phosphate products as second products. Induces dermonecrosis, hemolysis, increased vascular permeability, edema, inflammatory response, and platelet aggregation. The protein is Dermonecrotic toxin LspiSicTox-betaIII1 G of Loxosceles spinulosa (Recluse spider).